A 540-amino-acid polypeptide reads, in one-letter code: MQSSEVKPFSRLRAYLCPIYKSEFSKFVPLFLLAFFVGFNYCLLKNMKDTLVIVGSDAGAEVIPFLKVWGIVPGAVIVTMVYGWLGSRYPRDTVFYCFMAAFLGFFFLFAVIIYPVGDSLHLNSLADKLQELLPQGLRGFIVMVRYWSYSIYYVMSELWSSVVLSMLFWGLANQITTITEAGRFYALINTGLNLSSICAGEISYWMGKQTFVAYSFACDSWHSVMLNLTMLITCSGLIMIWLYRRIHHLTIDTSIPPSRRVLAEEGAATANLKEKKKPKAKARNLFLHLIQSRYLLGLAIIVLSYNLVIHLFEVVWKDQVSQIYSSHVEFNGYMSRITTLIGVVSVLAAVLLTGQCIRKWGWTVGALVTPLVMLVSGLLFFGTIFAAKRDISIFGGVLGMTPLALAAWTGGMQNVLSRGTKFTFFDQTKEMAFIPLSPEDKNHGKAAIDGVVSRIGKSGGSLIYQGLLVIFSSVAASLNVIALVLLIIMVVWIAVVAYIGKEYYSRAADAVATLKQPKEPSSSIVREAQESVEQEEMAVL.

Helical transmembrane passes span 24-44 (FSKFVPLFLLAFFVGFNYCLL), 62-82 (VIPFLKVWGIVPGAVIVTMVY), 94-114 (VFYCFMAAFLGFFFLFAVIIY), 151-171 (IYYVMSELWSSVVLSMLFWGL), 223-243 (SVMLNLTMLITCSGLIMIWLY), 295-315 (LLGLAIIVLSYNLVIHLFEVV), 337-357 (ITTLIGVVSVLAAVLLTGQCI), 367-387 (LVTPLVMLVSGLLFFGTIFAA), 391-411 (ISIFGGVLGMTPLALAAWTGG), 458-478 (SGGSLIYQGLLVIFSSVAASL), and 480-500 (VIALVLLIIMVVWIAVVAYIG).

Belongs to the ADP/ATP translocase tlc family.

It is found in the cell membrane. The polypeptide is ADP,ATP carrier protein 2 (tlcB) (Chlamydia pneumoniae (Chlamydophila pneumoniae)).